A 290-amino-acid polypeptide reads, in one-letter code: Serine protease 27 (290 aa).

The N-terminal stretch at 1 to 22 (MRRPAAVPLLLLLCFGSQRAKA) is a signal peptide. Positions 23–34 (ATACGRPRMLNR) are cleaved as a propeptide — activation peptide. A Peptidase S1 domain is found at 35-277 (MVGGQDTQEG…HHNWIHRIIP (243 aa)). N-linked (GlcNAc...) asparagine glycosylation occurs at Asn-55. A disulfide bridge connects residues Cys-60 and Cys-76. The active-site Charge relay system is His-75. Asn-79 is a glycosylation site (N-linked (GlcNAc...) asparagine). The Charge relay system role is filled by Asp-124. 3 disulfides stabilise this stretch: Cys-158-Cys-235, Cys-191-Cys-214, and Cys-225-Cys-253. Ser-229 functions as the Charge relay system in the catalytic mechanism.

The protein belongs to the peptidase S1 family. In terms of processing, N-glycosylated. Expressed predominantly in the pancreas.

It is found in the secreted. In Homo sapiens (Human), this protein is Serine protease 27 (PRSS27).